We begin with the raw amino-acid sequence, 197 residues long: Chromophore lyase CpcT/CpeT (197 aa).

This sequence belongs to the CpcT/CpeT biliprotein lyase family.

In terms of biological role, covalently attaches a chromophore to Cys residue(s) of phycobiliproteins. The protein is Chromophore lyase CpcT/CpeT of Synechococcus sp. (strain WH8103).